The following is a 129-amino-acid chain: Follitropin subunit beta (129 aa).

An N-terminal signal peptide occupies residues 1–18 (MKSVQLCLLLWCWRAICC). 6 cysteine pairs are disulfide-bonded: Cys21–Cys69, Cys35–Cys84, Cys38–Cys122, Cys46–Cys100, Cys50–Cys102, and Cys105–Cys112. Residues Asn25 and Asn42 are each glycosylated (N-linked (GlcNAc...) asparagine).

It belongs to the glycoprotein hormones subunit beta family. In terms of assembly, heterodimer. The active follitropin is a heterodimer composed of an alpha chain/CGA shared with other hormones and a unique beta chain/FSHB shown here.

It is found in the secreted. In terms of biological role, together with the alpha chain CGA constitutes follitropin, the follicle-stimulating hormone, and provides its biological specificity to the hormone heterodimer. Binds FSHR, a G protein-coupled receptor, on target cells to activate downstream signaling pathways. Follitropin is involved in follicle development and spermatogenesis in reproductive organs. In Meriones unguiculatus (Mongolian jird), this protein is Follitropin subunit beta (FSHB).